The following is a 216-amino-acid chain: Ras-related protein Rab-5C (216 aa).

GTP is bound by residues Ser30, Ala31, Gly33, Lys34, Ser35, Ser36, His47, Glu48, Thr53, Gly79, Asn134, Lys135, Asp137, Ala165, and Lys166. Ser35 serves as a coordination point for Mg(2+). Short sequence motifs (switch) lie at residues 45-57 (QFHE…IGAA) and 78-94 (AGQE…YRGA). Thr53 serves as a coordination point for Mg(2+). The disordered stretch occupies residues 184 to 216 (KNEPQNAPGGPGRNRVVDLQESSQPSRSQCCSN). Residues 203–216 (QESSQPSRSQCCSN) show a composition bias toward polar residues. 2 S-geranylgeranyl cysteine lipidation sites follow: Cys213 and Cys214.

Belongs to the small GTPase superfamily. Rab family. It depends on Mg(2+) as a cofactor. Detected in brain, ovary, rectum, small intestine, large intestine, liver, spleen, follicle and kidney (at protein level).

Its subcellular location is the cell membrane. It localises to the early endosome membrane. The catalysed reaction is GTP + H2O = GDP + phosphate + H(+). Its activity is regulated as follows. Regulated by guanine nucleotide exchange factors (GEFs) which promote the exchange of bound GDP for free GTP. Regulated by GTPase activating proteins (GAPs) which increase the GTP hydrolysis activity. Inhibited by GDP dissociation inhibitors (GDIs). Its function is as follows. The small GTPases Rab are key regulators of intracellular membrane trafficking, from the formation of transport vesicles to their fusion with membranes. Rabs cycle between an inactive GDP-bound form and an active GTP-bound form that is able to recruit to membranes different sets of downstream effectors directly responsible for vesicle formation, movement, tethering and fusion. The protein is Ras-related protein Rab-5C (RAB5C) of Gallus gallus (Chicken).